A 346-amino-acid chain; its full sequence is Lysyl aminopeptidase (346 aa).

2 residues coordinate Zn(2+): H63 and D177. E207 serves as the catalytic Proton acceptor. Residues E208, D230, and H314 each coordinate Zn(2+).

In terms of assembly, homotetramer. It depends on Zn(2+) as a cofactor.

It carries out the reaction Preferentially, release of N-terminal lysine.. Its function is as follows. Hydrolyzes di-, tri- and tetrapeptides with a lysine as the N-terminal amino acid and with Gly, Lys, Ala, Phe or Glu in the second position. The protein is Lysyl aminopeptidase of Pyrococcus furiosus (strain ATCC 43587 / DSM 3638 / JCM 8422 / Vc1).